Here is a 1478-residue protein sequence, read N- to C-terminus: Adhesion G protein-coupled receptor L2 (1478 aa).

The N-terminal stretch at 1–25 is a signal peptide; it reads MVSSGCRMRSLWFIIIISFLPNTEG. Residues 26 to 855 are Extracellular-facing; that stretch reads FSRAALPFGL…VHELLLTVIT (830 aa). One can recognise an SUEL-type lectin domain in the interval 41–130; it reads SCEGYSIDLR…KYLEVQYECV (90 aa). N99 carries N-linked (GlcNAc...) asparagine glycosylation. The Olfactomedin-like domain maps to 139 to 398; that stretch reads VCPGTLKAIV…ILRYSLEFGP (260 aa). A disulfide bridge links C140 with C322. An N-linked (GlcNAc...) asparagine glycan is attached at N335. The disordered stretch occupies residues 422 to 458; that stretch reads VSTTSTTSQKGPMSTTVAGSQEGSKGTKAPPAVSTTK. Polar residues predominate over residues 430–445; it reads QKGPMSTTVAGSQEGS. N-linked (GlcNAc...) asparagine glycans are attached at residues N524, N633, N735, N748, N791, N796, and N817. Positions 663 to 841 constitute a GAIN-B domain; the sequence is TRVSMPTENI…AILMAHREIA (179 aa). Cystine bridges form between C792–C823 and C811–C825. Positions 792–841 are GPS; the sequence is CSFWNYSERTMMGYWSTQGCKLVDTNKTRTTCACSHLTNFAILMAHREIA. The chain crosses the membrane as a helical span at residues 856–876; it reads WVGIVISLVCLAICIFTFCFF. The Cytoplasmic segment spans residues 877 to 884; that stretch reads RGLQSDRN. Residues 885-905 form a helical membrane-spanning segment; that stretch reads TIHKNLCINLFIAEFIFLIGI. Residues 906–911 lie on the Extracellular side of the membrane; the sequence is DKTKYM. A helical membrane pass occupies residues 912–932; the sequence is IACPIFAGLLHFFFLAAFAWM. Topologically, residues 933–955 are cytoplasmic; sequence CLEGVQLYLMLVEVFESEYSRKK. A helical membrane pass occupies residues 956 to 976; the sequence is YYYVAGYLFPATVVGVSAAID. At 977–994 the chain is on the extracellular side; it reads YKSYGTEKACWLHVDNYF. Residues 995 to 1015 form a helical membrane-spanning segment; sequence IWSFIGPVTFIILLNIIFLVI. Topologically, residues 1016–1056 are cytoplasmic; that stretch reads TLCKMVKHSNTLKPDSSRLENINNYRVCDGYYNTDLPGSWV. The helical transmembrane segment at 1057 to 1077 threads the bilayer; the sequence is LGAFALLCLLGLTWSFGLLFI. The Extracellular segment spans residues 1078–1081; the sequence is NEET. A helical transmembrane segment spans residues 1082 to 1102; the sequence is IVMAYLFTIFNAFQGVFIFIF. Topologically, residues 1103–1478 are cytoplasmic; sequence HCALQKKVRK…EGQMQLVTSL (376 aa). Residues 1378–1419 are disordered; it reads AEDHLQSPNRDSLYTSMPNLRDSPYQESSPDMEEDLSPSRRS. A compositionally biased stretch (polar residues) spans 1383–1395; it reads QSPNRDSLYTSMP. Phosphoserine occurs at positions 1393, 1428, and 1449.

This sequence belongs to the G-protein coupled receptor 2 family. Adhesion G-protein coupled receptor (ADGR) subfamily. As to quaternary structure, heterodimer of 2 chains generated by proteolytic processing; the large extracellular N-terminal fragment and the membrane-bound C-terminal fragment predominantly remain associated and non-covalently linked. Autoproteolytically processed at the GPS region of the GAIN-B domain; this cleavage modulates receptor activity. Ubiquitously expressed.

Its subcellular location is the postsynaptic cell membrane. Forms a heterodimer of 2 chains generated by proteolytic processing that remain associated through non-covalent interactions mediated by the GAIN-B domain. In the inactivated receptor, the Stachel sequence (also named stalk) is embedded in the GAIN-B domain, where it adopts a beta-strand conformation. On activation, the Stachel moves into the 7 transmembrane region and adopts a twisted hook-shaped configuration that forms contacts within the receptor, leading to coupling of a G-alpha protein, which activates signaling. The cleaved GAIN-B and N-terminal domains can then dissociate from the rest of the receptor. Functionally, orphan adhesion G-protein coupled receptor (aGPCR), which mediates synapse specificity. Ligand binding causes a conformation change that triggers signaling via guanine nucleotide-binding proteins (G proteins) and modulates the activity of downstream effectors. Following G-protein coupled receptor activation, associates with cell adhesion molecules that are expressed at the surface of adjacent cells to direct synapse specificity. Specifically mediates the establishment of perforant-path synapses on CA1-region pyramidal neurons in the hippocampus. Localizes to postsynaptic spines in excitatory synapses in the S.lacunosum-moleculare and interacts with presynaptic cell adhesion molecules, such as teneurins, promoting synapse formation. The chain is Adhesion G protein-coupled receptor L2 (ADGRL2) from Bos taurus (Bovine).